A 160-amino-acid polypeptide reads, in one-letter code: Baculoviral IAP repeat-containing protein 5.1-A (160 aa).

The BIR repeat unit spans residues 27-97 (RLATFADWPF…KRSANCGFLS (71 aa)). Position 43 is a phosphothreonine; by CDK1 (Thr43). The Zn(2+) site is built by Cys66, Cys69, His86, and Cys93.

It belongs to the IAP family. As to quaternary structure, component of the CPC at least composed of survivin/birc5, incenp, cdca8/borealin and/or cdca9/dasra-A, and aurkb/aurora-B. Interacts directly with incenp (via N-terminus), and may weakly interact with aurkb (via N-terminus) to stabilize the complex. Interacts with GTP-bound ran in both the S and M phases of the cell cycle. Also found in a complex with ubiquitin-mediated signaling proteins including at least usp9x/xFAM, nploc4/npl4 and ufd1. Ubiquitination is required for centrosome-targeting.

The protein localises to the cytoplasm. It localises to the nucleus. Its subcellular location is the chromosome. It is found in the centromere. The protein resides in the cytoskeleton. The protein localises to the spindle. Functionally, component of the chromosomal passenger complex (CPC), a complex that acts as a key regulator of mitosis. The CPC complex has essential functions at the centromere in ensuring correct chromosome alignment and segregation and is required for chromatin-induced microtubule stabilization and spindle assembly. Stimulates the mitotic kinase activity of aurkb/aurora-B in the CPC. Does not appear to exhibit anti-apoptotic activity. This is Baculoviral IAP repeat-containing protein 5.1-A (birc5.1-a) from Xenopus laevis (African clawed frog).